A 499-amino-acid polypeptide reads, in one-letter code: Glucose-6-phosphate isomerase (499 aa).

Glutamate 352 functions as the Proton donor in the catalytic mechanism. Active-site residues include histidine 383 and lysine 487.

It belongs to the GPI family.

The protein resides in the cytoplasm. It carries out the reaction alpha-D-glucose 6-phosphate = beta-D-fructose 6-phosphate. Its pathway is carbohydrate biosynthesis; gluconeogenesis. The protein operates within carbohydrate degradation; glycolysis; D-glyceraldehyde 3-phosphate and glycerone phosphate from D-glucose: step 2/4. Its function is as follows. Catalyzes the reversible isomerization of glucose-6-phosphate to fructose-6-phosphate. The protein is Glucose-6-phosphate isomerase of Legionella pneumophila (strain Lens).